Consider the following 904-residue polypeptide: Translation initiation factor IF-2 (904 aa).

The segment at 239–316 (QAATQAKTSE…DDGQGSFQAP (78 aa)) is disordered. Basic and acidic residues predominate over residues 248 to 278 (EGAEKGTLHKKPETPGKKGDKGGRAADDGKK). The region spanning 404 to 571 (HRAPVVTVMG…QVLLQAEILE (168 aa)) is the tr-type G domain. The segment at 413–420 (GHVDHGKT) is G1. Position 413-420 (413-420 (GHVDHGKT)) interacts with GTP. Residues 438–442 (GITQH) form a G2 region. A G3 region spans residues 459 to 462 (DTPG). Residues 459 to 463 (DTPGH) and 513 to 516 (NKID) each bind GTP. The G4 stretch occupies residues 513–516 (NKID). The interval 549-551 (SAK) is G5.

The protein belongs to the TRAFAC class translation factor GTPase superfamily. Classic translation factor GTPase family. IF-2 subfamily.

The protein resides in the cytoplasm. In terms of biological role, one of the essential components for the initiation of protein synthesis. Protects formylmethionyl-tRNA from spontaneous hydrolysis and promotes its binding to the 30S ribosomal subunits. Also involved in the hydrolysis of GTP during the formation of the 70S ribosomal complex. The protein is Translation initiation factor IF-2 of Dechloromonas aromatica (strain RCB).